The sequence spans 93 residues: Small ribosomal subunit protein uS19 (93 aa).

Belongs to the universal ribosomal protein uS19 family.

Its function is as follows. Protein S19 forms a complex with S13 that binds strongly to the 16S ribosomal RNA. In Streptococcus gordonii (strain Challis / ATCC 35105 / BCRC 15272 / CH1 / DL1 / V288), this protein is Small ribosomal subunit protein uS19.